The primary structure comprises 85 residues: Large ribosomal subunit protein bL27 (85 aa).

Belongs to the bacterial ribosomal protein bL27 family.

In Pseudomonas fluorescens (strain ATCC BAA-477 / NRRL B-23932 / Pf-5), this protein is Large ribosomal subunit protein bL27.